A 237-amino-acid polypeptide reads, in one-letter code: Protein PetR (237 aa).

Positions 8-121 (HLLIVDDDER…ELLLRINAIL (114 aa)) constitute a Response regulatory domain. At Asp-57 the chain carries 4-aspartylphosphate. A DNA-binding region (H-T-H motif) is located at residues 77-95 (ATPILLLTARGETRERIEG). The ompR/PhoB-type DNA-binding region spans 132–236 (PKYLSLGPLR…VRGLGYMLAP (105 aa)).

Functionally, necessary for photosynthetic and respiratory growth. Probable promoter-specific protein mediating the interaction between DNA and RNA polymerase. The protein is Protein PetR (petR) of Rhodobacter capsulatus (strain ATCC BAA-309 / NBRC 16581 / SB1003).